The sequence spans 298 residues: ATP synthase gamma chain (298 aa).

It belongs to the ATPase gamma chain family. F-type ATPases have 2 components, CF(1) - the catalytic core - and CF(0) - the membrane proton channel. CF(1) has five subunits: alpha(3), beta(3), gamma(1), delta(1), epsilon(1). CF(0) has three main subunits: a, b and c.

The protein localises to the cell inner membrane. Its function is as follows. Produces ATP from ADP in the presence of a proton gradient across the membrane. The gamma chain is believed to be important in regulating ATPase activity and the flow of protons through the CF(0) complex. The protein is ATP synthase gamma chain of Francisella philomiragia subsp. philomiragia (strain ATCC 25017 / CCUG 19701 / FSC 153 / O#319-036).